Consider the following 528-residue polypeptide: Probable rhamnogalacturonate lyase A (528 aa).

The signal sequence occupies residues 1 to 20 (MLSRTILFSTSFLWVRVANA). Cystine bridges form between C50–C93 and C184–C193.

Belongs to the polysaccharide lyase 4 family.

The protein localises to the secreted. It catalyses the reaction Endotype eliminative cleavage of L-alpha-rhamnopyranosyl-(1-&gt;4)-alpha-D-galactopyranosyluronic acid bonds of rhamnogalacturonan I domains in ramified hairy regions of pectin leaving L-rhamnopyranose at the reducing end and 4-deoxy-4,5-unsaturated D-galactopyranosyluronic acid at the non-reducing end.. Its function is as follows. Pectinolytic enzymes consist of four classes of enzymes: pectin lyase, polygalacturonase, pectin methylesterase and rhamnogalacturonase. Degrades the rhamnogalacturonan I (RG-I) backbone of pectin. The polypeptide is Probable rhamnogalacturonate lyase A (rglA) (Aspergillus flavus (strain ATCC 200026 / FGSC A1120 / IAM 13836 / NRRL 3357 / JCM 12722 / SRRC 167)).